The sequence spans 988 residues: UPF0182 protein MAB_3498c (988 aa).

The next 7 membrane-spanning stretches (helical) occupy residues 19–39 (LVAASLVIVVLLLIGPRLVDT), 63–83 (LALFLIVGTLVAAVVFAGFGL), 114–134 (LFLIGVPILIGVLAGVVAQSY), 176–196 (FIAASIALIVNGLVHYIFGGI), 211–231 (IQLITFAGILVLLKVAAYWLD), 260–280 (KLILLAIAVICAVAVFSALVL), and 288–308 (IGLALLLLSSLVVGAGWPLIV).

The protein belongs to the UPF0182 family.

The protein localises to the cell membrane. This chain is UPF0182 protein MAB_3498c, found in Mycobacteroides abscessus (strain ATCC 19977 / DSM 44196 / CCUG 20993 / CIP 104536 / JCM 13569 / NCTC 13031 / TMC 1543 / L948) (Mycobacterium abscessus).